The chain runs to 595 residues: Leiomodin-1 (595 aa).

2 disordered regions span residues 1 to 322 and 467 to 568; these read MSKV…KVKN and DKQR…QEKN. The residue at position 12 (Ser-12) is a Phosphoserine. The segment covering 27–40 has biased composition (acidic residues); that stretch reads EEMEELEKELDVVD. 8 stretches are compositionally biased toward basic and acidic residues: residues 72–105, 117–127, 134–193, 201–224, 232–251, 259–289, 467–476, and 484–493; these read CEKESKKIIQREMSVDESKQVGRKTDAKNGEDKG, QDSDVGKEPKK, FSRD…EKTG, SRDKDKKREEVKEPSKKEEVKLTA, RQEDGKQKESREDRDKKPEV, RDSRKEDEKVKKEETQPDKGVREEGKTREKQ, DKQRQKRLQE, and SGEKKDRLEV. Ser-85 bears the Phosphoserine mark. Residue Ser-135 is modified to Phosphoserine. Repeat copies occupy residues 165–180, 181–196, 197–212, 213–227, 228–243, 244–257, 258–273, and 274–288. The segment at 165-288 is 8 X approximate tandem repeats; sequence AAVDRKEAGK…VREEGKTREK (124 aa). 2 stretches are compositionally biased toward pro residues: residues 503 to 513 and 527 to 538; these read SPKPSPQPSPK and AAPPPPPPPLAP. Residues 503 to 522 form a 5 X 4 AA approximate tandem repeats region; the sequence is SPKPSPQPSPKSAPKNSPKK. A Phosphoserine modification is found at Ser-550. One can recognise a WH2 domain in the interval 569-588; the sequence is SRDQLLAAIRSSNLKQLKKV.

In terms of tissue distribution, detected in smooth muscle, in stomach and uterus, blood vessel wall, and in slow fibers in extraocular muscle, urinary bladder and sternothyroid muscle (at protein level).

It is found in the cytoplasm. It localises to the myofibril. The protein resides in the sarcomere. Its subcellular location is the cytoskeleton. Required for proper contractility of visceral smooth muscle cells. Mediates nucleation of actin filaments. The polypeptide is Leiomodin-1 (Rattus norvegicus (Rat)).